Reading from the N-terminus, the 219-residue chain is Ribose-5-phosphate isomerase A (219 aa).

Substrate-binding positions include 28–31 (SGST), 81–84 (DGAD), and 94–97 (KGGG). The active-site Proton acceptor is the Glu-103. Substrate is bound at residue Lys-121.

This sequence belongs to the ribose 5-phosphate isomerase family. In terms of assembly, homodimer.

The catalysed reaction is aldehydo-D-ribose 5-phosphate = D-ribulose 5-phosphate. It participates in carbohydrate degradation; pentose phosphate pathway; D-ribose 5-phosphate from D-ribulose 5-phosphate (non-oxidative stage): step 1/1. Its function is as follows. Catalyzes the reversible conversion of ribose-5-phosphate to ribulose 5-phosphate. This chain is Ribose-5-phosphate isomerase A, found in Haemophilus ducreyi (strain 35000HP / ATCC 700724).